A 410-amino-acid chain; its full sequence is Lissencephaly-1 homolog (410 aa).

A LisH domain is found at 7-39; the sequence is QRDELNRAIADYLRSNGYEEAYSTFKKEAELDN. Residues 32 to 82 are a coiled coil; sequence KKEAELDNNEELDKKYAGLLEKKWTSVIRLQKKVMELESKLNEAKEEITLG. 7 WD repeats span residues 106–147, 148–189, 190–229, 232–271, 274–333, 336–375, and 378–410; these read GHRS…RTLK, GHTD…RTMH, GHDHNVSSVAIMPNGDHIISASRDKTMKMWEVATGYCVKT, GHREWVRMVRPNQDGTLIASCSNDQTVRVWVVASKECKAE, EHEH…CLMT, GHDNWVRGVLFHPGGKFIVTCADDKTLRIWDYKNKRCMKT, and AHEHFVTSLDFHKAAPYVVTGSVDQTVKVWECR.

This sequence belongs to the WD repeat LIS1/nudF family. Can self-associate. Component of the cytosolic PAF-AH (I) heterotetrameric enzyme, which is composed of PAFAH1B1 (beta), PAFAH1B2 (alpha2) and PAFAH1B3 (alpha1) subunits. The catalytic activity of the enzyme resides in the alpha1 (PAFAH1B3) and alpha2 (PAFAH1B2) subunits, whereas the beta subunit (PAFAH1B1) has regulatory activity. Trimer formation is not essential for the catalytic activity. Interacts with dynein, dynactin, nde1 and ndel1.

The protein localises to the cytoplasm. The protein resides in the cytoskeleton. It localises to the microtubule organizing center. Its subcellular location is the centrosome. Functionally, regulatory subunit (beta subunit) of the cytosolic type I platelet-activating factor (PAF) acetylhydrolase (PAF-AH (I)), an enzyme that catalyzes the hydrolyze of the acetyl group at the sn-2 position of PAF and its analogs and participates in the PAF inactivation. Positively regulates the activity of the minus-end directed microtubule motor protein dynein. May enhance dynein-mediated microtubule sliding by targeting dynein to the microtubule plus end. Required for several dynein- and microtubule-dependent processes such as the maintenance of Golgi integrity, the peripheral transport of microtubule fragments and the coupling of the nucleus and centrosome. May be required for proliferation of neuronal precursors and neuronal migration. The sequence is that of Lissencephaly-1 homolog (pafah1b1) from Tetraodon nigroviridis (Spotted green pufferfish).